We begin with the raw amino-acid sequence, 562 residues long: 3-hydroxy-3-methylglutaryl-coenzyme A reductase 2 (562 aa).

2 helical membrane passes run 32-56 (ALPLPLYLTNTFFLSLFFATVYFLL) and 77-100 (ICALIGFVASFIYLLGFCGIDLIF). Residues 101–146 (RSSSDDDVWVNDGMIPCNQSLDCREVLPIKPNSVDPPRESELDSVE) form a linker region. An N-linked (GlcNAc...) asparagine glycan is attached at N118. The tract at residues 147–562 (DEEIVKLVID…DIGPSSQVNR (416 aa)) is catalytic. E240 (charge relay system) is an active-site residue. N304 carries N-linked (GlcNAc...) asparagine glycosylation. Residues K372 and D448 each act as charge relay system in the active site. Catalysis depends on H544, which acts as the Proton donor. N-linked (GlcNAc...) asparagine glycosylation is present at N548. A Phosphoserine modification is found at S550.

It belongs to the HMG-CoA reductase family. In terms of tissue distribution, restricted to young seedlings, roots, and inflorescences. Expressed in root tips, shoot apex, secretory zone of the stigma, microspores, mature pollen grains, gynoecium vascular tissue and fertilized ovules.

The protein resides in the endoplasmic reticulum membrane. The catalysed reaction is (R)-mevalonate + 2 NADP(+) + CoA = (3S)-3-hydroxy-3-methylglutaryl-CoA + 2 NADPH + 2 H(+). The protein operates within metabolic intermediate biosynthesis; (R)-mevalonate biosynthesis; (R)-mevalonate from acetyl-CoA: step 3/3. Its activity is regulated as follows. Regulated at the post-translational level in response to alterations of the sphingolipid and the sterol biosynthetic pathways. Catalyzes the synthesis of mevalonate. The specific precursor of all isoprenoid compounds present in plants. This is 3-hydroxy-3-methylglutaryl-coenzyme A reductase 2 (HMG2) from Arabidopsis thaliana (Mouse-ear cress).